The sequence spans 699 residues: Endoplasmic reticulum mannosyl-oligosaccharide 1,2-alpha-mannosidase (699 aa).

Over 1-84 (MAACEGRRSG…WKQLSRLQRN (84 aa)) the chain is Cytoplasmic. Residues 85 to 105 (MILFLLAFLLFCGLLFYINLA) form a helical; Signal-anchor for type II membrane protein membrane-spanning segment. The Lumenal segment spans residues 106 to 699 (DHWKALAFRL…AHPLPIWTPA (594 aa)). The disordered stretch occupies residues 125–243 (IAGLKPANPP…LPPARTQGTP (119 aa)). Positions 176–201 (DLKDGTQEEATKRQEAPVDPRPEGDP) are enriched in basic and acidic residues. Residue E330 is the Proton donor of the active site. The active site involves D463. C527 and C556 are disulfide-bonded. E570 functions as the Proton donor in the catalytic mechanism. Residue E599 is part of the active site. T688 is a binding site for Ca(2+).

It belongs to the glycosyl hydrolase 47 family. It depends on Ca(2+) as a cofactor. In terms of tissue distribution, widely expressed.

Its subcellular location is the endoplasmic reticulum membrane. The catalysed reaction is N(4)-(alpha-D-Man-(1-&gt;2)-alpha-D-Man-(1-&gt;2)-alpha-D-Man-(1-&gt;3)-[alpha-D-Man-(1-&gt;2)-alpha-D-Man-(1-&gt;3)-[alpha-D-Man-(1-&gt;2)-alpha-D-Man-(1-&gt;6)]-alpha-D-Man-(1-&gt;6)]-beta-D-Man-(1-&gt;4)-beta-D-GlcNAc-(1-&gt;4)-beta-D-GlcNAc)-L-asparaginyl-[protein] (N-glucan mannose isomer 9A1,2,3B1,2,3) + 4 H2O = N(4)-(alpha-D-Man-(1-&gt;3)-[alpha-D-Man-(1-&gt;3)-[alpha-D-Man-(1-&gt;6)]-alpha-D-Man-(1-&gt;6)]-beta-D-Man-(1-&gt;4)-beta-D-GlcNAc-(1-&gt;4)-beta-D-GlcNAc)-L-asparaginyl-[protein] (N-glucan mannose isomer 5A1,2) + 4 beta-D-mannose. It catalyses the reaction N(4)-(alpha-D-Man-(1-&gt;2)-alpha-D-Man-(1-&gt;2)-alpha-D-Man-(1-&gt;3)-[alpha-D-Man-(1-&gt;3)-[alpha-D-Man-(1-&gt;2)-alpha-D-Man-(1-&gt;6)]-alpha-D-Man-(1-&gt;6)]-beta-D-Man-(1-&gt;4)-beta-D-GlcNAc-(1-&gt;4)-beta-D-GlcNAc)-L-asparaginyl-[protein] (N-glucan mannose isomer 8A1,2,3B1,3) + 3 H2O = N(4)-(alpha-D-Man-(1-&gt;3)-[alpha-D-Man-(1-&gt;3)-[alpha-D-Man-(1-&gt;6)]-alpha-D-Man-(1-&gt;6)]-beta-D-Man-(1-&gt;4)-beta-D-GlcNAc-(1-&gt;4)-beta-D-GlcNAc)-L-asparaginyl-[protein] (N-glucan mannose isomer 5A1,2) + 3 beta-D-mannose. It participates in protein modification; protein glycosylation. With respect to regulation, inhibited by both 1-deoxymannojirimycin (dMNJ) and kifunensine. Involved in glycoprotein quality control targeting of misfolded glycoproteins for degradation. It primarily trims a single alpha-1,2-linked mannose residue from Man(9)GlcNAc(2) to produce Man(8)GlcNAc(2), but at high enzyme concentrations, as found in the ER quality control compartment (ERQC), it further trims the carbohydrates to Man(5-6)GlcNAc(2). The protein is Endoplasmic reticulum mannosyl-oligosaccharide 1,2-alpha-mannosidase (MAN1B1) of Homo sapiens (Human).